The following is a 484-amino-acid chain: Nuclear rim protein 1 (484 aa).

Serine 3 carries the phosphoserine modification. 2 consecutive transmembrane segments (helical) span residues 145–165 and 237–257; these read FTIFILLSLNLYVSCKFMFGY and IPTNFIINLFVSFSPTAIVFL. A disordered region spans residues 416-457; it reads SSNENLEKGGAFLPNQDQNRPSKSLSPLRKTPLSARQKRFEG. Serine 417 carries the phosphoserine modification. Polar residues predominate over residues 430-440; it reads NQDQNRPSKSL. Phosphoserine is present on serine 474.

The protein belongs to the NUR1 family. In terms of assembly, interacts with CSM1.

It localises to the nucleus membrane. In terms of biological role, member of a perinuclear network that controls recombination at multiple loci to maintain genome stability. Required for rDNA repeat stability. The polypeptide is Nuclear rim protein 1 (NUR1) (Saccharomyces cerevisiae (strain JAY291) (Baker's yeast)).